Reading from the N-terminus, the 602-residue chain is Prostaglandin G/H synthase 1 (602 aa).

The N-terminal stretch at 1 to 26 is a signal peptide; the sequence is MSRRSLSLQFPLLLLLLLLPPPPVLL. In terms of domain architecture, EGF-like spans 34–72; that stretch reads PVNPCCYYPCQNQGVCVRFGLDHYQCDCTRTGYSGPNCT. 4 disulfides stabilise this stretch: cysteine 38–cysteine 49, cysteine 39–cysteine 161, cysteine 43–cysteine 59, and cysteine 61–cysteine 71. Asparagine 70, asparagine 106, and asparagine 146 each carry an N-linked (GlcNAc...) asparagine glycan. Histidine 209 serves as the catalytic Proton acceptor. The active-site For cyclooxygenase activity is the tyrosine 387. A heme b-binding site is contributed by histidine 390. Asparagine 412 carries N-linked (GlcNAc...) asparagine glycosylation. Cysteine 571 and cysteine 577 are joined by a disulfide.

Belongs to the prostaglandin G/H synthase family. Homodimer. Heme b serves as cofactor.

It localises to the microsome membrane. The protein localises to the endoplasmic reticulum membrane. It carries out the reaction (5Z,8Z,11Z,14Z)-eicosatetraenoate + AH2 + 2 O2 = prostaglandin H2 + A + H2O. The catalysed reaction is (5Z,8Z,11Z,14Z)-eicosatetraenoate + 2 O2 = prostaglandin G2. It catalyses the reaction prostaglandin G2 + AH2 = prostaglandin H2 + A + H2O. The enzyme catalyses (9Z,12Z)-octadecadienoate + AH2 + O2 = (9R)-hydroxy-(10E,12Z)-octadecadienoate + A + H2O. It carries out the reaction (9Z,12Z)-octadecadienoate + AH2 + O2 = (9S)-hydroxy-(10E,12Z)-octadecadienoate + A + H2O. The catalysed reaction is (9Z,12Z)-octadecadienoate + AH2 + O2 = (13S)-hydroxy-(9Z,11E)-octadecadienoate + A + H2O. It catalyses the reaction (9Z,12Z)-octadecadienoate + AH2 + O2 = (13R)-hydroxy-(9Z,11E)-octadecadienoate + A + H2O. The protein operates within lipid metabolism; prostaglandin biosynthesis. With respect to regulation, the cyclooxygenase activity is inhibited by nonsteroidal anti-inflammatory drugs (NSAIDs) including ibuprofen, flurbiprofen, ketoprofen, naproxen, flurbiprofen, anirolac, fenclofenac and diclofenac. In terms of biological role, dual cyclooxygenase and peroxidase that plays an important role in the biosynthesis pathway of prostanoids, a class of C20 oxylipins mainly derived from arachidonate ((5Z,8Z,11Z,14Z)-eicosatetraenoate, AA, C20:4(n-6)), with a particular role in the inflammatory response. The cyclooxygenase activity oxygenates AA to the hydroperoxy endoperoxide prostaglandin G2 (PGG2), and the peroxidase activity reduces PGG2 to the hydroxy endoperoxide prostaglandin H2 (PGH2), the precursor of all 2-series prostaglandins and thromboxanes. This complex transformation is initiated by abstraction of hydrogen at carbon 13 (with S-stereochemistry), followed by insertion of molecular O2 to form the endoperoxide bridge between carbon 9 and 11 that defines prostaglandins. The insertion of a second molecule of O2 (bis-oxygenase activity) yields a hydroperoxy group in PGG2 that is then reduced to PGH2 by two electrons. Involved in the constitutive production of prostanoids in particular in the stomach and platelets. In gastric epithelial cells, it is a key step in the generation of prostaglandins, such as prostaglandin E2 (PGE2), which plays an important role in cytoprotection. In platelets, it is involved in the generation of thromboxane A2 (TXA2), which promotes platelet activation and aggregation, vasoconstriction and proliferation of vascular smooth muscle cells. Can also use linoleate (LA, (9Z,12Z)-octadecadienoate, C18:2(n-6)) as substrate and produce hydroxyoctadecadienoates (HODEs) in a regio- and stereospecific manner, being (9R)-HODE ((9R)-hydroxy-(10E,12Z)-octadecadienoate) and (13S)-HODE ((13S)-hydroxy-(9Z,11E)-octadecadienoate) its major products. This chain is Prostaglandin G/H synthase 1, found in Rattus norvegicus (Rat).